The primary structure comprises 750 residues: Photosystem I P700 chlorophyll a apoprotein A1 (750 aa).

The next 8 membrane-spanning stretches (helical) occupy residues 70–93 (VFSAHFGQLSIIFLWLSGMYFHGA), 156–179 (LYCTAIGALVFAALMLFAGWFHYH), 195–219 (LNHHLAGLLGLGSLSWAGHQVHVSL), 291–309 (IAHHHLAIAIIFLIAGHMY), 346–369 (WHAQLALNLAMLGSLTIVVAHHMY), 385–411 (LSLFTHHMWIGGFLIVGAAAHAAIFMV), 433–455 (AIISHLNWACIFLGFHSFGLYIH), and 531–549 (FLVHHIHAFTIHVTVLILL). The [4Fe-4S] cluster site is built by Cys-573 and Cys-582. 2 helical membrane passes run 589-610 (HVFLGLFWMYNAISVVIFHFSW) and 664-686 (LSAYGLFFLGAHFVWAFSLMFLF). His-675 is a binding site for chlorophyll a'. Chlorophyll a is bound by residues Met-683 and Tyr-691. Phylloquinone is bound at residue Trp-692. Residues 724 to 744 (AVGVTHYLLGGIATTWAFFLA) traverse the membrane as a helical segment.

This sequence belongs to the PsaA/PsaB family. The PsaA/B heterodimer binds the P700 chlorophyll special pair and subsequent electron acceptors. PSI consists of a core antenna complex that captures photons, and an electron transfer chain that converts photonic excitation into a charge separation. The eukaryotic PSI reaction center is composed of at least 11 subunits. It depends on P700 is a chlorophyll a/chlorophyll a' dimer, A0 is one or more chlorophyll a, A1 is one or both phylloquinones and FX is a shared 4Fe-4S iron-sulfur center. as a cofactor.

It is found in the plastid. Its subcellular location is the chloroplast thylakoid membrane. The enzyme catalyses reduced [plastocyanin] + hnu + oxidized [2Fe-2S]-[ferredoxin] = oxidized [plastocyanin] + reduced [2Fe-2S]-[ferredoxin]. PsaA and PsaB bind P700, the primary electron donor of photosystem I (PSI), as well as the electron acceptors A0, A1 and FX. PSI is a plastocyanin-ferredoxin oxidoreductase, converting photonic excitation into a charge separation, which transfers an electron from the donor P700 chlorophyll pair to the spectroscopically characterized acceptors A0, A1, FX, FA and FB in turn. Oxidized P700 is reduced on the lumenal side of the thylakoid membrane by plastocyanin. The chain is Photosystem I P700 chlorophyll a apoprotein A1 from Amborella trichopoda.